Reading from the N-terminus, the 277-residue chain is Large ribosomal subunit protein uL2c (277 aa).

Residues 226–249 form a disordered region; the sequence is NPIDHPHGGGEGRAPIGREKPLTP. A compositionally biased stretch (basic and acidic residues) spans 229–246; it reads DHPHGGGEGRAPIGREKP.

The protein belongs to the universal ribosomal protein uL2 family. As to quaternary structure, part of the 50S ribosomal subunit.

The protein localises to the plastid. It localises to the chloroplast. The protein is Large ribosomal subunit protein uL2c (rpl2) of Physcomitrium patens (Spreading-leaved earth moss).